The chain runs to 510 residues: NAD(P)H-quinone oxidoreductase subunit 2 A, chloroplastic (510 aa).

Helical transmembrane passes span 24–44 (LLLF…GLIL), 57–77 (MPWL…ALLF), 99–119 (IFQF…VEYI), 124–144 (MAIT…MFLC), 149–169 (LITI…LSGY), 183–203 (YLLM…WLYG), 227–247 (PGIS…LSPA), 295–315 (WHLL…LIAI), 323–343 (MLAY…IVGD), 354–374 (YMLF…LFGL), 395–415 (ALSL…AGFF), 418–438 (LHLF…IGLL), and 482–502 (LSMI…SPII).

Belongs to the complex I subunit 2 family. As to quaternary structure, NDH is composed of at least 16 different subunits, 5 of which are encoded in the nucleus.

The protein resides in the plastid. It localises to the chloroplast thylakoid membrane. The catalysed reaction is a plastoquinone + NADH + (n+1) H(+)(in) = a plastoquinol + NAD(+) + n H(+)(out). It catalyses the reaction a plastoquinone + NADPH + (n+1) H(+)(in) = a plastoquinol + NADP(+) + n H(+)(out). Its function is as follows. NDH shuttles electrons from NAD(P)H:plastoquinone, via FMN and iron-sulfur (Fe-S) centers, to quinones in the photosynthetic chain and possibly in a chloroplast respiratory chain. The immediate electron acceptor for the enzyme in this species is believed to be plastoquinone. Couples the redox reaction to proton translocation, and thus conserves the redox energy in a proton gradient. In Populus trichocarpa (Western balsam poplar), this protein is NAD(P)H-quinone oxidoreductase subunit 2 A, chloroplastic.